The following is a 985-amino-acid chain: Serine/threonine-protein kinase N2 (985 aa).

The REM-1 1 domain maps to 33-109 (KLDFSDTIVQ…LQELNAHIVV (77 aa)). Lys77 carries the post-translational modification N6-acetyllysine. Ser110 is modified (phosphoserine). Residues 111-136 (DPEDYTDCPRTPDTPNSDSRSSTSNN) form a disordered region. Phosphothreonine is present on residues Thr121 and Thr124. Over residues 121 to 136 (TPDTPNSDSRSSTSNN) the composition is skewed to low complexity. 2 consecutive REM-1 domains span residues 121–204 (TPDT…TNEL) and 207–286 (DNAK…ELPK). Phosphoserine occurs at positions 303, 307, 361, and 363. The interval 352-383 (ATSVALPGWSPSENRSSFMSRTSKSKSGSSRN) is disordered. The region spanning 354-474 (SVALPGWSPS…LYLEPQGTLF (121 aa)) is the C2 domain. Over residues 366-382 (RSSFMSRTSKSKSGSSR) the composition is skewed to low complexity. Residues 383 to 464 (NLLKTDDLSN…FLDNQRHGMA (82 aa)) form a necessary to rescue apical junction formation region. Phosphoserine occurs at positions 536, 584, 621, and 632. Positions 570–590 (DLEPEAPPAPPRASSLGEIDD) are disordered. In terms of domain architecture, Protein kinase spans 658 to 917 (FRCCAVLGRG…AEDVKKHPFF (260 aa)). ATP is bound by residues 664 to 672 (LGRGHFGKV) and Lys687. Asp783 serves as the catalytic Proton acceptor. The residue at position 817 (Thr817) is a Phosphothreonine; by PDPK1. The interval 918–978 (RLTDWSALLD…EEEQEMFRDF (61 aa)) is necessary for the catalytic activity. In terms of domain architecture, AGC-kinase C-terminal spans 918 to 985 (RLTDWSALLD…RDFDYVADWC (68 aa)). Ser953 is modified (phosphoserine). Thr959 bears the Phosphothreonine mark. The tract at residues 979-985 (DYVADWC) is negatively regulates the responsiveness of the catalytic activity by cardiolipin and is required for optimal activation by the GTP-bound RhoA.

It belongs to the protein kinase superfamily. AGC Ser/Thr protein kinase family. PKC subfamily. Interacts (via the REM repeats) with RHOA (GTP-bound form preferentially) and interacts (via the REM repeats) with RAC1 (GTP-bound form preferentially); the interactions induce its autophosphorylation. Interacts with RHOC. Interacts with NCK1 (via SH3 domains) and NCK2. Interacts with CD44. Interacts (via C-terminal kinase domain) with PDPK1; the interaction stimulates PDPK1 kinase activity. Interacts with MAP3K2; the interaction activates PRK2 kinase activity in a MAP3K2-independent kinase activity. Interacts (via C-terminal domain) with AKT1; the interaction occurs with the C-terminal cleavage product of PRK2 in apoptotic cells. Interacts (via C-terminus) with PTPN13 (via PDZ 3 domain). Interacts with CDK10. Phosphorylated during mitosis. Autophosphorylated. Phosphorylated. Binding to Rho and Rac promotes autophosphorylation and phosphorylation on serine and threonine residues. Phosphorylated by CDK10. In terms of processing, proteolytically cleaved by caspase-3 during the induction of apoptotic cell death. Activated by limited proteolysis with trypsin. In terms of tissue distribution, expressed in liver (at protein level).

It localises to the cytoplasm. The protein localises to the nucleus. Its subcellular location is the membrane. The protein resides in the cell projection. It is found in the lamellipodium. It localises to the cytoskeleton. The protein localises to the cleavage furrow. Its subcellular location is the midbody. The protein resides in the cell junction. It carries out the reaction L-seryl-[protein] + ATP = O-phospho-L-seryl-[protein] + ADP + H(+). The enzyme catalyses L-threonyl-[protein] + ATP = O-phospho-L-threonyl-[protein] + ADP + H(+). Kinase activity is activated upon binding to GTP-bound Rho1/Rac1 GTPases. Activated by caspase-3 (CASP3) cleavage during apoptosis. Activated by lipids, particularly cardiolipin and to a lesser extent by other acidic phospholipids and unsaturated fatty acids. Two specific sites, Thr-817 (activation loop of the kinase domain) and Thr-959 (turn motif), need to be phosphorylated for its full activation. Functionally, PKC-related serine/threonine-protein kinase and Rho/Rac effector protein that participates in specific signal transduction responses in the cell. Plays a role in the regulation of cell cycle progression, actin cytoskeleton assembly, cell migration, cell adhesion, tumor cell invasion and transcription activation signaling processes. Phosphorylates CTTN in hyaluronan-induced astrocytes and hence decreases CTTN ability to associate with filamentous actin. Phosphorylates HDAC5, therefore lead to impair HDAC5 import. Direct RhoA target required for the regulation of the maturation of primordial junctions into apical junction formation in bronchial epithelial cells. Required for G2/M phases of the cell cycle progression and abscission during cytokinesis in a ECT2-dependent manner. Stimulates FYN kinase activity that is required for establishment of skin cell-cell adhesion during keratinocytes differentiation. Regulates epithelial bladder cells speed and direction of movement during cell migration and tumor cell invasion. Inhibits Akt pro-survival-induced kinase activity. Mediates Rho protein-induced transcriptional activation via the c-fos serum response factor (SRF). Involved in the negative regulation of ciliogenesis. This chain is Serine/threonine-protein kinase N2 (Pkn2), found in Rattus norvegicus (Rat).